A 94-amino-acid chain; its full sequence is Large ribosomal subunit protein bL28A (94 aa).

Residues 63–94 (GHRGRRRAARAGSAPAHFARQAGSSLRTAAIL) are disordered. Over residues 72–82 (RAGSAPAHFAR) the composition is skewed to low complexity. Polar residues predominate over residues 84–94 (AGSSLRTAAIL).

The protein belongs to the bacterial ribosomal protein bL28 family.

This Mycobacterium bovis (strain ATCC BAA-935 / AF2122/97) protein is Large ribosomal subunit protein bL28A (rpmB1).